The chain runs to 364 residues: Aminomethyltransferase (364 aa).

The protein belongs to the GcvT family. In terms of assembly, the glycine cleavage system is composed of four proteins: P, T, L and H.

The catalysed reaction is N(6)-[(R)-S(8)-aminomethyldihydrolipoyl]-L-lysyl-[protein] + (6S)-5,6,7,8-tetrahydrofolate = N(6)-[(R)-dihydrolipoyl]-L-lysyl-[protein] + (6R)-5,10-methylene-5,6,7,8-tetrahydrofolate + NH4(+). Its function is as follows. The glycine cleavage system catalyzes the degradation of glycine. This chain is Aminomethyltransferase, found in Shigella flexneri.